Consider the following 236-residue polypeptide: 15,16-dihydrobiliverdin:ferredoxin oxidoreductase (236 aa).

This sequence belongs to the HY2 family.

The enzyme catalyses 15,16-dihydrobiliverdin + oxidized 2[4Fe-4S]-[ferredoxin] = biliverdin IXalpha + reduced 2[4Fe-4S]-[ferredoxin] + 2 H(+). In terms of biological role, catalyzes the two-electron reduction of biliverdin IX-alpha at the C15 methine bridge. The polypeptide is 15,16-dihydrobiliverdin:ferredoxin oxidoreductase (pebA) (Synechococcus sp. (strain WH8020)).